We begin with the raw amino-acid sequence, 52 residues long: MKSYLLVSMLLLLNSILVYIYTKNVQILVSGITVAVIIYIVVKIIFERFVHQ.

Transmembrane regions (helical) follow at residues 1–21 (MKSY…VYIY) and 27–47 (ILVS…IIFE).

As to quaternary structure, forms a complex composed of CedA, CedA1 and CedA2.

The protein localises to the cell membrane. Functionally, part of the Ced system, which is involved in DNA import. The chain is DNA import protein CedA2 from Sulfolobus acidocaldarius (strain ATCC 33909 / DSM 639 / JCM 8929 / NBRC 15157 / NCIMB 11770).